The chain runs to 233 residues: Small ribosomal subunit protein uS2 (233 aa).

Belongs to the universal ribosomal protein uS2 family.

The polypeptide is Small ribosomal subunit protein uS2 (Bacillus anthracis).